The primary structure comprises 1029 residues: 2-oxoglutarate dehydrogenase, mitochondrial (1029 aa).

Arg-317, Asp-415, Asn-448, Ile-450, and Gln-676 together coordinate thiamine diphosphate. Mg(2+) is bound by residues Asp-415, Asn-448, and Ile-450.

Belongs to the alpha-ketoglutarate dehydrogenase family. Homodimer. Component of the 2-oxoglutarate dehydrogenase complex. Thiamine diphosphate is required as a cofactor. Mg(2+) serves as cofactor.

The protein localises to the mitochondrion matrix. It catalyses the reaction N(6)-[(R)-lipoyl]-L-lysyl-[protein] + 2-oxoglutarate + H(+) = N(6)-[(R)-S(8)-succinyldihydrolipoyl]-L-lysyl-[protein] + CO2. Functionally, the 2-oxoglutarate dehydrogenase complex catalyzes the overall conversion of 2-oxoglutarate to succinyl-CoA and CO(2). It contains multiple copies of three enzymatic components: 2-oxoglutarate dehydrogenase (E1), dihydrolipoamide succinyltransferase (E2) and lipoamide dehydrogenase (E3). This chain is 2-oxoglutarate dehydrogenase, mitochondrial (ogdh-1), found in Caenorhabditis elegans.